We begin with the raw amino-acid sequence, 766 residues long: DENN domain-containing protein 1B (766 aa).

The region spanning 14 to 143 (DLVLKVKCHA…YNHPVPKANT (130 aa)) is the uDENN domain. Positions 160–296 (GLPTIPESRN…VVSALKNKLK (137 aa)) constitute a cDENN domain. The dDENN domain occupies 298–375 (QSTATGDGVA…DGRLAKLNAG (78 aa)). The FXDXF motif signature appears at 378-382 (FSDIF). The disordered stretch occupies residues 472-523 (NEKGENREKHKLSQTHLKRPHKSLDGTLYDDDDDDDDIERASKISSEDGEET). Residues 480 to 492 (KHKLSQTHLKRPH) are compositionally biased toward basic residues. Residues 499–509 (LYDDDDDDDDI) show a composition bias toward acidic residues. Position 500 is a phosphotyrosine (tyrosine 500). Residues serine 516, serine 517, serine 530, and serine 533 each carry the phosphoserine modification. A Clathrin box motif is present at residues 547–556 (DLLGEILDTL). Disordered regions lie at residues 611 to 634 (LGQD…VSSG) and 652 to 732 (LCAD…KPSK). Phosphoserine is present on residues serine 632 and serine 633. Positions 694 to 704 (TPGQAPLQSED) are enriched in polar residues. Residues 722–732 (KAGKEDTKPSK) are compositionally biased toward basic and acidic residues.

In terms of assembly, interacts with RAB35. Interacts with clathrin heavy chain/CLTC. Interacts with components of the adapter protein complex 2 (AP-2) AP2A2 and AP2B1. Interacts with CD3E. Post-translationally, phosphorylated on serine and/or threonine, possibly regulating the guanine nucleotide exchange factor (GEF) activity. In terms of tissue distribution, expressed in a subset of dendritic cells (DCs).

Its subcellular location is the cytoplasm. The protein resides in the cytosol. It localises to the cytoplasmic vesicle. It is found in the clathrin-coated vesicle. Its function is as follows. Guanine nucleotide exchange factor (GEF) for RAB35 that acts as a regulator of T-cell receptor (TCR) internalization in TH2 cells. Acts by promoting the exchange of GDP to GTP, converting inactive GDP-bound RAB35 into its active GTP-bound form. Plays a role in clathrin-mediated endocytosis. Controls cytokine production in TH2 lymphocytes by controlling the rate of TCR internalization and routing to endosomes: acts by mediating clathrin-mediated endocytosis of TCR via its interaction with the adapter protein complex 2 (AP-2) and GEF activity. Dysregulation leads to impaired TCR down-modulation and recycling, affecting cytokine production in TH2 cells. In Mus musculus (Mouse), this protein is DENN domain-containing protein 1B.